Reading from the N-terminus, the 305-residue chain is D-alanine--D-alanine ligase (305 aa).

The ATP-grasp domain maps to 107 to 299 (KVIFASAGLK…FGELVLRILQ (193 aa)). Residue 134 to 185 (PLPVVVKPSREGSSVGVGIVRDPSRMQAALDEAFRYDSEILIEGFIDGREVQ) coordinates ATP. Mg(2+)-binding residues include Asp-253, Glu-266, and Asn-268.

Belongs to the D-alanine--D-alanine ligase family. Mg(2+) serves as cofactor. It depends on Mn(2+) as a cofactor.

Its subcellular location is the cytoplasm. It carries out the reaction 2 D-alanine + ATP = D-alanyl-D-alanine + ADP + phosphate + H(+). The protein operates within cell wall biogenesis; peptidoglycan biosynthesis. Cell wall formation. This is D-alanine--D-alanine ligase from Citrifermentans bemidjiense (strain ATCC BAA-1014 / DSM 16622 / JCM 12645 / Bem) (Geobacter bemidjiensis).